Reading from the N-terminus, the 214-residue chain is A-type ATP synthase subunit D (214 aa).

It belongs to the V-ATPase D subunit family. Has multiple subunits with at least A(3), B(3), C, D, E, F, H, I and proteolipid K(x).

Its subcellular location is the cell membrane. Component of the A-type ATP synthase that produces ATP from ADP in the presence of a proton gradient across the membrane. This Methanosphaera stadtmanae (strain ATCC 43021 / DSM 3091 / JCM 11832 / MCB-3) protein is A-type ATP synthase subunit D.